Here is a 799-residue protein sequence, read N- to C-terminus: Elongation factor G, mitochondrial (799 aa).

Residues 1–33 (MRSPSLARLQTRAVFGLTRSARFQPQTLLRQRC) constitute a mitochondrion transit peptide. In terms of domain architecture, tr-type G spans 97–384 (DKCRNIGIAA…GVIDYLPNPA (288 aa)). GTP is bound by residues 106-113 (AHIDSGKT), 182-186 (DTPGH), and 236-239 (NKMD).

This sequence belongs to the TRAFAC class translation factor GTPase superfamily. Classic translation factor GTPase family. EF-G/EF-2 subfamily.

It is found in the mitochondrion. It participates in protein biosynthesis; polypeptide chain elongation. Functionally, mitochondrial GTPase that catalyzes the GTP-dependent ribosomal translocation step during translation elongation. During this step, the ribosome changes from the pre-translocational (PRE) to the post-translocational (POST) state as the newly formed A-site-bound peptidyl-tRNA and P-site-bound deacylated tRNA move to the P and E sites, respectively. Catalyzes the coordinated movement of the two tRNA molecules, the mRNA and conformational changes in the ribosome. The sequence is that of Elongation factor G, mitochondrial (mef1) from Penicillium rubens (strain ATCC 28089 / DSM 1075 / NRRL 1951 / Wisconsin 54-1255) (Penicillium chrysogenum).